Reading from the N-terminus, the 88-residue chain is Ribonuclease P protein component 1 (88 aa).

Belongs to the eukaryotic/archaeal RNase P protein component 1 family. As to quaternary structure, consists of a catalytic RNA component and at least 4-5 protein subunits.

The protein resides in the cytoplasm. It carries out the reaction Endonucleolytic cleavage of RNA, removing 5'-extranucleotides from tRNA precursor.. In terms of biological role, part of ribonuclease P, a protein complex that generates mature tRNA molecules by cleaving their 5'-ends. The polypeptide is Ribonuclease P protein component 1 (Nitrosopumilus maritimus (strain SCM1)).